The sequence spans 204 residues: uncharacterized protein (204 aa).

Positions methionine 1–alanine 17 are cleaved as a signal peptide. Positions alanine 17–lysine 100 are disordered. Cysteine 18 is lipidated: N-palmitoyl cysteine. Cysteine 18 is lipidated: S-diacylglycerol cysteine. The span at aspartate 23–serine 70 shows a compositional bias: basic and acidic residues. Low complexity predominate over residues alanine 71 to lysine 100.

The protein localises to the cell membrane. This is an uncharacterized protein from Staphylococcus aureus (strain MSSA476).